Reading from the N-terminus, the 448-residue chain is Chaperone SurA (448 aa).

Positions 1–27 (MKKTLRFAAVASGLVASLITVAPSASA) are cleaved as a signal peptide. PpiC domains are found at residues 185-288 (QQDL…RLVE) and 301-399 (IVQT…QVLG).

It localises to the periplasm. The catalysed reaction is [protein]-peptidylproline (omega=180) = [protein]-peptidylproline (omega=0). Chaperone involved in the correct folding and assembly of outer membrane proteins. Recognizes specific patterns of aromatic residues and the orientation of their side chains, which are found more frequently in integral outer membrane proteins. May act in both early periplasmic and late outer membrane-associated steps of protein maturation. The chain is Chaperone SurA from Burkholderia pseudomallei (strain 1710b).